The chain runs to 110 residues: Large ribosomal subunit protein uL22 (110 aa).

This sequence belongs to the universal ribosomal protein uL22 family. In terms of assembly, part of the 50S ribosomal subunit.

Functionally, this protein binds specifically to 23S rRNA; its binding is stimulated by other ribosomal proteins, e.g. L4, L17, and L20. It is important during the early stages of 50S assembly. It makes multiple contacts with different domains of the 23S rRNA in the assembled 50S subunit and ribosome. Its function is as follows. The globular domain of the protein is located near the polypeptide exit tunnel on the outside of the subunit, while an extended beta-hairpin is found that lines the wall of the exit tunnel in the center of the 70S ribosome. In Salmonella arizonae (strain ATCC BAA-731 / CDC346-86 / RSK2980), this protein is Large ribosomal subunit protein uL22.